Here is a 475-residue protein sequence, read N- to C-terminus: MSPQTETKASVGFKAGVKDYKLTYYTPDYQTKDTDILAAFRVTPQPGVPPEEAGAAVAAESSTGTWTTVWTDGLTSLDRYKGRCYGIEPVPGEESQFIAYVAYPLDLFEEGSVTNMFTSIVGNVFGFKALRALRLEDLRIPPAYIKTFQGPPHGIQVERDKLNKYGRPLLGCTIKPKLGLSAKNYGRAVYECLRGGLDFTKDDENVNSQPFMRWRDRFLFCAEAIYKAQAETGEIKGHYLNATAGTCEEMIKRAVFARELGAPIIMHDYLTGGFTANTSLAHYCRDNGLLLHIHRAMHAVIDRQKNHGMHFRVLAKALRLSGGDHIHAGTVVGKLEGERDITLGFVDLLRDEFVEKDRSRGIFFTQDWVSLPGVLPVASGGIHVWHMPALTEIFGDDSVLQFGGGTLGHPWGNAPGAVANRVALEACVQARNEGRDLAREGNEIIREASKWSPELAAACEVWKEIKFEFPAVDTI.

Residues methionine 1 to serine 2 constitute a propeptide that is removed on maturation. An N-acetylproline modification is found at proline 3. Residue lysine 14 is modified to N6,N6,N6-trimethyllysine. The substrate site is built by asparagine 123 and threonine 173. The active-site Proton acceptor is lysine 175. Lysine 177 contributes to the substrate binding site. Mg(2+) contacts are provided by lysine 201, aspartate 203, and glutamate 204. The residue at position 201 (lysine 201) is an N6-carboxylysine. Histidine 294 acts as the Proton acceptor in catalysis. 3 residues coordinate substrate: arginine 295, histidine 327, and serine 379.

This sequence belongs to the RuBisCO large chain family. Type I subfamily. In terms of assembly, heterohexadecamer of 8 large chains and 8 small chains; disulfide-linked. The disulfide link is formed within the large subunit homodimers. Requires Mg(2+) as cofactor. In terms of processing, the disulfide bond which can form in the large chain dimeric partners within the hexadecamer appears to be associated with oxidative stress and protein turnover.

Its subcellular location is the plastid. It localises to the chloroplast. It carries out the reaction 2 (2R)-3-phosphoglycerate + 2 H(+) = D-ribulose 1,5-bisphosphate + CO2 + H2O. The catalysed reaction is D-ribulose 1,5-bisphosphate + O2 = 2-phosphoglycolate + (2R)-3-phosphoglycerate + 2 H(+). Its function is as follows. RuBisCO catalyzes two reactions: the carboxylation of D-ribulose 1,5-bisphosphate, the primary event in carbon dioxide fixation, as well as the oxidative fragmentation of the pentose substrate in the photorespiration process. Both reactions occur simultaneously and in competition at the same active site. The chain is Ribulose bisphosphate carboxylase large chain from Carica papaya (Papaya).